Reading from the N-terminus, the 883-residue chain is DNA double-strand break repair Rad50 ATPase (883 aa).

Residues arginine 12, 32 to 38 (NGSGKSS), and glutamine 134 each bind ATP. Positions 218-420 (ELRGELGGLE…EIGSRRGELK (203 aa)) form a coiled coil. The Zinc-hook domain maps to 395 to 492 (IQKARERKEE…ELVEVEKTLK (98 aa)). Residues cysteine 440 and cysteine 443 each contribute to the Zn(2+) site. Coiled coils occupy residues 452–585 (RKEL…KKLG) and 620–741 (EDLL…LLKE). 790 to 795 (FLSGGE) contributes to the ATP binding site.

The protein belongs to the SMC family. RAD50 subfamily. As to quaternary structure, homodimer. Forms a heterotetramer composed of two Mre11 subunits and two Rad50 subunits. Zn(2+) serves as cofactor.

Functionally, part of the Rad50/Mre11 complex, which is involved in the early steps of DNA double-strand break (DSB) repair. The complex may facilitate opening of the processed DNA ends to aid in the recruitment of HerA and NurA. Rad50 controls the balance between DNA end bridging and DNA resection via ATP-dependent structural rearrangements of the Rad50/Mre11 complex. In Thermococcus kodakarensis (strain ATCC BAA-918 / JCM 12380 / KOD1) (Pyrococcus kodakaraensis (strain KOD1)), this protein is DNA double-strand break repair Rad50 ATPase.